A 505-amino-acid chain; its full sequence is Maturase K (505 aa).

The protein belongs to the intron maturase 2 family. MatK subfamily.

The protein resides in the plastid. The protein localises to the chloroplast. Functionally, usually encoded in the trnK tRNA gene intron. Probably assists in splicing its own and other chloroplast group II introns. In Rhizophora stylosa (Bakau), this protein is Maturase K.